A 414-amino-acid polypeptide reads, in one-letter code: MALISLAIDYKKSPIEVRSEFALSGLDVSMLYRSILAIDNVVHAVILSTCNRTEVYLEISDLRVVDDILVWWQGYVRNPNYKIKDYFKLRQGTEVIMHLMKLACGLESMVLGEPQILGQVKDSYTLSKKNHAIGKELDRVFQKVFATAKRVRSETRIGYCPVSVAFSAITLAKRQLDNISSKNVLIIGAGQTGELLFRHVTALAPKQIMLANRTIEKAQKITSVFRNASAHYLSELPQLIKKADIIIAAVNVLEYIVTCKYVGDKPRVFIDISIPQALDPKLGELEQNVYYCVDDINAVIEDNKDKRKYESSKAQKIIVKSLEEYLEKEKAIISNSAIKELFQKADGLVDLSLEKSLAKIRNGKDAEEIIKRFAYEIKKKVLHYPVVGMKEASKQGRSDCLVCMKRMFGLNVEK.

Substrate-binding positions include 49–52, Ser108, 113–115, and Gln119; these read TCNR and EPQ. The active-site Nucleophile is Cys50. Residue 188-193 participates in NADP(+) binding; it reads GAGQTG.

This sequence belongs to the glutamyl-tRNA reductase family. Homodimer.

It carries out the reaction (S)-4-amino-5-oxopentanoate + tRNA(Glu) + NADP(+) = L-glutamyl-tRNA(Glu) + NADPH + H(+). The protein operates within porphyrin-containing compound metabolism; protoporphyrin-IX biosynthesis; 5-aminolevulinate from L-glutamyl-tRNA(Glu): step 1/2. Functionally, catalyzes the NADPH-dependent reduction of glutamyl-tRNA(Glu) to glutamate 1-semialdehyde (GSA). The protein is Glutamyl-tRNA reductase of Francisella tularensis subsp. holarctica (strain LVS).